A 199-amino-acid chain; its full sequence is TATA-box-binding protein (199 aa).

Tandem repeats lie at residues 10–86 and 101–177.

This sequence belongs to the TBP family.

Functionally, general factor that plays a role in the activation of archaeal genes transcribed by RNA polymerase. Binds specifically to the TATA box promoter element which lies close to the position of transcription initiation. This is TATA-box-binding protein from Pyrobaculum calidifontis (strain DSM 21063 / JCM 11548 / VA1).